We begin with the raw amino-acid sequence, 574 residues long: Probable glucomannan 4-beta-mannosyltransferase 6 (574 aa).

A helical membrane pass occupies residues 87 to 107; the sequence is VVACMVMSVIVLAEKVFLGVV. The active site involves D180. 2 residues coordinate substrate: D239 and D241. D333 is an active-site residue. 4 consecutive transmembrane segments (helical) span residues 412–432, 437–457, 523–543, and 548–568; these read IISTFFTFFFFSVLLPMKVFF, IPLWELILIPTAIILLHSVGT, FHCLELFIGGFLLTSACYDYL, and IFYIFLLSQSIIYFAIGFEFM.

It belongs to the glycosyltransferase 2 family. Plant cellulose synthase-like A subfamily.

The protein resides in the golgi apparatus membrane. It carries out the reaction GDP-mannose + (glucomannan)n = GDP + (glucomannan)n+1.. Functionally, probable mannan synthase which consists of a 4-beta-mannosyltransferase activity on mannan using GDP-mannose. The beta-1,4-mannan product is the backbone for galactomannan synthesis by galactomannan galactosyltransferase. Galactomannan is a noncellulosic polysaccharides of plant cell wall. This chain is Probable glucomannan 4-beta-mannosyltransferase 6, found in Oryza sativa subsp. japonica (Rice).